The primary structure comprises 220 residues: Inner membrane-spanning protein YciB (220 aa).

6 helical membrane passes run 20–40, 57–77, 86–106, 123–143, 156–176, and 187–207; these read EVPPLLKLALELGPLLVFFFA, IGAPIFLATALFMAATVIALA, LPIMPLVSGIVVLVFGALTLW, LFGGILLGGLFFGKSLLGYVF, KLTLRWALFFIFLAIVNEIVW, and FKVWGIMPITIVFTLLQMPLI.

This sequence belongs to the YciB family.

It localises to the cell inner membrane. Plays a role in cell envelope biogenesis, maintenance of cell envelope integrity and membrane homeostasis. The sequence is that of Inner membrane-spanning protein YciB from Brucella melitensis biotype 2 (strain ATCC 23457).